A 269-amino-acid chain; its full sequence is MNDSLKAQCIAEFLGTGLFLFFGIGCLSALKVAGASLGLWEICIIWGLGISLAVYLTAGISGAHLNPAITIALWLFACFPGRKVLPYTVAQVAGAFGGALLAYLLYGSLFTEYESAHQMVRGSLESLHLASIFSTYPAAALSVWQAALVEVVITSILMGMIMALTDDGNGVPKGPLAPLLIGILVAVIGASTGPLTGFAMNPARDFGPKLFAWMAGWGDVAMTGGRDIPYFIVPIVAPIIGACAGAAIYRYLIGKNLPCNTCKLDENES.

2 helical membrane passes run 10-30 (IAEF…LSAL) and 42-62 (ICII…GISG). Positions 66 to 68 (NPA) match the NPA 1 motif. 3 consecutive transmembrane segments (helical) span residues 69-89 (ITIA…PYTV), 143-163 (VWQA…MIMA), and 179-199 (LLIG…TGFA). The NPA 2 motif lies at 201–203 (NPA). The helical transmembrane segment at 228-248 (IPYFIVPIVAPIIGACAGAAI) threads the bilayer.

It belongs to the MIP/aquaporin (TC 1.A.8) family.

It localises to the cell inner membrane. In terms of biological role, probably facilitates diffusion of 1,2-propanediol (1,2-PD) into the cell. This is Propanediol uptake facilitator PduF from Citrobacter freundii.